We begin with the raw amino-acid sequence, 273 residues long: MDQKFAVFGNPISHSKSPRIHTLFSEQTGIEHRYGKVLAPSEAFENTLVSFFADGAQGANITTPFKERAYDQCDELTDRASLAGAVNTIKRLEDGRLLGDNTDGIGLLSDLERQNLIRTTDHILLVGAGGAARGVILPLLSYGCTVVVTNRTHTRAQQLAKVFNHIGDIDVCEMSELAGQRFDLVINATASGLHGEVPNLPAAILTSQTRCYDMFYQAGTTPFLAWAQRLGLADYADGLGMLVGQAAHAFKLWHGVMPEITPVLAQLRSELGK.

Shikimate contacts are provided by residues 15 to 17 and Thr-62; that span reads SKS. Catalysis depends on Lys-66, which acts as the Proton acceptor. Asp-78 is a binding site for NADP(+). Shikimate-binding residues include Asn-87 and Asp-103. NADP(+) contacts are provided by residues 127–131, 150–155, Ala-218, and Gly-238; these read GAGGA and NRTHTR.

Belongs to the shikimate dehydrogenase family. Homodimer.

The catalysed reaction is shikimate + NADP(+) = 3-dehydroshikimate + NADPH + H(+). The protein operates within metabolic intermediate biosynthesis; chorismate biosynthesis; chorismate from D-erythrose 4-phosphate and phosphoenolpyruvate: step 4/7. Involved in the biosynthesis of the chorismate, which leads to the biosynthesis of aromatic amino acids. Catalyzes the reversible NADPH linked reduction of 3-dehydroshikimate (DHSA) to yield shikimate (SA). The protein is Shikimate dehydrogenase (NADP(+)) of Yersinia pseudotuberculosis serotype O:1b (strain IP 31758).